Reading from the N-terminus, the 362-residue chain is Dual-specificity RNA methyltransferase RlmN (362 aa).

Glutamate 91 (proton acceptor) is an active-site residue. The Radical SAM core domain maps to 97-333 (EDDRGTLCVS…VTTRKTRGED (237 aa)). A disulfide bridge connects residues cysteine 104 and cysteine 338. [4Fe-4S] cluster-binding residues include cysteine 111, cysteine 115, and cysteine 118. S-adenosyl-L-methionine contacts are provided by residues 164 to 165 (GE), serine 196, 218 to 220 (SLH), and asparagine 295. Cysteine 338 functions as the S-methylcysteine intermediate in the catalytic mechanism.

It belongs to the radical SAM superfamily. RlmN family. The cofactor is [4Fe-4S] cluster.

The protein resides in the cytoplasm. The catalysed reaction is adenosine(2503) in 23S rRNA + 2 reduced [2Fe-2S]-[ferredoxin] + 2 S-adenosyl-L-methionine = 2-methyladenosine(2503) in 23S rRNA + 5'-deoxyadenosine + L-methionine + 2 oxidized [2Fe-2S]-[ferredoxin] + S-adenosyl-L-homocysteine. It carries out the reaction adenosine(37) in tRNA + 2 reduced [2Fe-2S]-[ferredoxin] + 2 S-adenosyl-L-methionine = 2-methyladenosine(37) in tRNA + 5'-deoxyadenosine + L-methionine + 2 oxidized [2Fe-2S]-[ferredoxin] + S-adenosyl-L-homocysteine. Specifically methylates position 2 of adenine 2503 in 23S rRNA and position 2 of adenine 37 in tRNAs. m2A2503 modification seems to play a crucial role in the proofreading step occurring at the peptidyl transferase center and thus would serve to optimize ribosomal fidelity. In Methylobacillus flagellatus (strain ATCC 51484 / DSM 6875 / VKM B-1610 / KT), this protein is Dual-specificity RNA methyltransferase RlmN.